The primary structure comprises 486 residues: Transcription factor aptf-4 (486 aa).

Disordered regions lie at residues 25-49 (CEPS…SAKM) and 150-173 (LSTT…NQEK). Positions 150-169 (LSTTSANFTPDWNTTTNGPC) are enriched in polar residues. The interval 301–430 (QRQRKVTCFS…IVEQAALYCE (130 aa)) is H-S-H (helix-span-helix), dimerization.

Belongs to the AP-2 family. As to quaternary structure, binds DNA as a dimer.

It is found in the nucleus. Sequence-specific DNA-binding protein that interacts with enhancer elements to regulate transcription of selected genes. Required for neuroblast and epidermal morphogenesis, perhaps acting in cooperation with transcription factor aptf-2. The sequence is that of Transcription factor aptf-4 from Caenorhabditis elegans.